The chain runs to 157 residues: Succinate dehydrogenase assembly factor 2-A, mitochondrial (157 aa).

Residues 1–21 (MLRQVLSSTSVRRLLVSPTRC) constitute a mitochondrion transit peptide.

It belongs to the SDHAF2 family. As to quaternary structure, interacts with the flavoprotein subunit within the SDH catalytic dimer.

Its subcellular location is the mitochondrion matrix. Plays an essential role in the assembly of succinate dehydrogenase (SDH), an enzyme complex (also referred to as respiratory complex II) that is a component of both the tricarboxylic acid (TCA) cycle and the mitochondrial electron transport chain, and which couples the oxidation of succinate to fumarate with the reduction of ubiquinone (coenzyme Q) to ubiquinol. Required for flavinylation (covalent attachment of FAD) of the flavoprotein subunit of the SDH catalytic dimer. The sequence is that of Succinate dehydrogenase assembly factor 2-A, mitochondrial from Drosophila mojavensis (Fruit fly).